The following is a 258-amino-acid chain: Countin-1 (258 aa).

Positions 1–21 (MNKLFSLILALFLVNSAVVSS) are cleaved as a signal peptide. In terms of domain architecture, Saposin B-type spans 22 to 106 (LDSCSICVDF…EKISVCKTND (85 aa)). 3 cysteine pairs are disulfide-bonded: Cys25–Cys102, Cys28–Cys96, and Cys56–Cys69. 2 N-linked (GlcNAc...) asparagine glycosylation sites follow: Asn121 and Asn215. Positions 233–248 (AGSFSGSSQSTQTGAA) are enriched in low complexity. Positions 233–258 (AGSFSGSSQSTQTGAASGSGSGFALF) are disordered. The span at 249–258 (SGSGSGFALF) shows a compositional bias: gly residues.

Belongs to the countin family. Component of the counting factor (CF) complex, which includes cf60, cf50, cf45-1 and ctnA.

It localises to the secreted. Cell-counting factor that limits the maximum size of the multicellular structure. May down-regulate the expression of gp24, which mediates cell adhesion. This Dictyostelium discoideum (Social amoeba) protein is Countin-1 (ctnA).